Consider the following 639-residue polypeptide: Extracellular metalloproteinase mep (639 aa).

Residues Met1 to Val16 form the signal peptide. Residues Cys17–Glu245 constitute a propeptide that is removed on maturation. N-linked (GlcNAc...) asparagine glycosylation is found at Asn287, Asn320, Asn336, and Asn368. His429 is a binding site for Zn(2+). Residue Glu430 is part of the active site. Position 433 (His433) interacts with Zn(2+). The N-linked (GlcNAc...) asparagine glycan is linked to Asn509.

This sequence belongs to the peptidase M36 family. It depends on Zn(2+) as a cofactor.

It is found in the secreted. Its function is as follows. Secreted metalloproteinase that allows assimilation of proteinaceous substrates. This is Extracellular metalloproteinase mep (mep) from Aspergillus flavus (strain ATCC 200026 / FGSC A1120 / IAM 13836 / NRRL 3357 / JCM 12722 / SRRC 167).